The primary structure comprises 137 residues: Interferon-induced transmembrane protein 3 (137 aa).

Residues 1 to 57 (MNHTSQAFITAASGGQPPNYERIKEEYEVAEMGAPHGSASVRTTVINMPREVSVPDH) lie on the Cytoplasmic side of the membrane. At tyrosine 20 the chain carries Phosphotyrosine. Lysine 24 participates in a covalent cross-link: Glycyl lysine isopeptide (Lys-Gly) (interchain with G-Cter in ubiquitin). Residue tyrosine 27 is modified to Phosphotyrosine. An intramembrane region (helical) is located at residues 58–78 (VVWSLFNTLFMNFCCLGFIAY). The interaction with SPP1 stretch occupies residues 60 to 93 (WSLFNTLFMNFCCLGFIAYAYSVKSRDRKMVGDV). S-palmitoyl cysteine attachment occurs at residues cysteine 71 and cysteine 72. The Cytoplasmic segment spans residues 79–109 (AYSVKSRDRKMVGDVTGAQAYASTAKCLNIS). Residues lysine 83, lysine 88, and lysine 104 each participate in a glycyl lysine isopeptide (Lys-Gly) (interchain with G-Cter in ubiquitin) cross-link. Cysteine 105 carries the S-palmitoyl cysteine lipid modification. Positions 108–133 (ISTLVLSILMVVITIVSVIIIVLNAQ) are interaction with VAPA. Residues 110 to 130 (TLVLSILMVVITIVSVIIIVL) form a helical membrane-spanning segment. Residues 131 to 137 (NAQNLHT) are Extracellular-facing.

The protein belongs to the CD225/Dispanin family. Interacts with ATP6V0B. Interacts with CD81. Interacts with SPP1; the interaction reduces OPN expression. Interacts with BRI3. Polyubiquitinated with both 'Lys-48' and 'Lys-63' linkages. Ubiquitination negatively regulates antiviral activity. Lys-24 is the most prevalent ubiquitination site. In terms of processing, phosphorylation at Tyr-20 is required for endosomal and lysosomal location. Expressed in acinar cell. Predominantly expressed in nascent primordial germ cells, as well as in gonadal germ cells.

Its subcellular location is the cell membrane. It localises to the late endosome membrane. The protein localises to the early endosome membrane. The protein resides in the lysosome membrane. It is found in the cytoplasm. Its subcellular location is the perinuclear region. Functionally, IFN-induced antiviral protein which disrupts intracellular cholesterol homeostasis. Inhibits the entry of viruses to the host cell cytoplasm by preventing viral fusion with cholesterol depleted endosomes. May inactivate new enveloped viruses which buds out of the infected cell, by letting them go out with a cholesterol depleted membrane. Active against multiple viruses, including influenza A virus, SARS coronaviruses (SARS-CoV and SARS-CoV-2), Marburg virus (MARV), Ebola virus (EBOV), Dengue virus (DNV), West Nile virus (WNV), human immunodeficiency virus type 1 (HIV-1), hepatitis C virus (HCV) and vesicular stomatitis virus (VSV). Can inhibit: influenza virus hemagglutinin protein-mediated viral entry, MARV and EBOV GP1,2-mediated viral entry, SARS-CoV and SARS-CoV-2 S protein-mediated viral entry and VSV G protein-mediated viral entry. Plays a critical role in the structural stability and function of vacuolar ATPase (v-ATPase). Establishes physical contact with the v-ATPase of endosomes which is critical for proper clathrin localization and is also required for the function of the v-ATPase to lower the pH in phagocytic endosomes thus establishing an antiviral state. In hepatocytes, IFITM proteins act in a coordinated manner to restrict HCV infection by targeting the endocytosed HCV virion for lysosomal degradation. IFITM2 and IFITM3 display anti-HCV activity that may complement the anti-HCV activity of IFITM1 by inhibiting the late stages of HCV entry, possibly in a coordinated manner by trapping the virion in the endosomal pathway and targeting it for degradation at the lysosome. Exerts opposing activities on SARS-CoV-2, including amphipathicity-dependent restriction of virus at endosomes and amphipathicity-independent enhancement of infection at the plasma membrane. The chain is Interferon-induced transmembrane protein 3 from Mus musculus (Mouse).